We begin with the raw amino-acid sequence, 620 residues long: Arginine--tRNA ligase (620 aa).

The 'HIGH' region signature appears at 147–157 (ANPTGPIHIGG).

It belongs to the class-I aminoacyl-tRNA synthetase family. As to quaternary structure, monomer.

The protein localises to the cytoplasm. The enzyme catalyses tRNA(Arg) + L-arginine + ATP = L-arginyl-tRNA(Arg) + AMP + diphosphate. The polypeptide is Arginine--tRNA ligase (Bifidobacterium longum (strain NCC 2705)).